The primary structure comprises 237 residues: Eukaryotic translation initiation factor 3 subunit J (237 aa).

Residues 20–64 are disordered; it reads ANNINKWEGEDDDEDVKESWEDEEEKKDEEKPTKTEAPAKTKPNK. Acidic residues predominate over residues 28–46; the sequence is GEDDDEDVKESWEDEEEKK. Residues 47-58 show a composition bias toward basic and acidic residues; it reads DEEKPTKTEAPA. Residues 63–115 are a coiled coil; sequence NKVLKAKLLEQECLEKEEEAKRLANMSTEEKLAEKLRLQKIQEESDLKSALET.

This sequence belongs to the eIF-3 subunit J family. As to quaternary structure, component of the eukaryotic translation initiation factor 3 (eIF-3) complex. The eIF-3 complex interacts with pix.

The protein resides in the cytoplasm. Its function is as follows. Component of the eukaryotic translation initiation factor 3 (eIF-3) complex, which is involved in protein synthesis of a specialized repertoire of mRNAs and, together with other initiation factors, stimulates binding of mRNA and methionyl-tRNAi to the 40S ribosome. The eIF-3 complex specifically targets and initiates translation of a subset of mRNAs involved in cell proliferation. This is Eukaryotic translation initiation factor 3 subunit J from Drosophila grimshawi (Hawaiian fruit fly).